The chain runs to 606 residues: NADH-ubiquinone oxidoreductase chain 5 (606 aa).

16 helical membrane-spanning segments follow: residues 4 to 24 (FPSL…TTTI), 38 to 58 (NIIS…IHSG), 87 to 107 (MIFV…SMWY), 114 to 134 (ITQF…LVTA), 140 to 160 (LFIG…WWYG), 171 to 191 (AILY…WFLF), 213 to 233 (LMGL…HPWL), 241 to 261 (TPVS…FLLI), 273 to 293 (VQTF…ICAL), 301 to 320 (IIAF…IGIN), 325 to 347 (AFLH…GSII), 366 to 386 (MPFT…MPFL), 409 to 429 (LLIT…MIFF), 457 to 477 (LLIG…PTTI), 488 to 508 (LTAL…SLAT), and 583 to 603 (LIKL…LLLM).

It belongs to the complex I subunit 5 family. As to quaternary structure, core subunit of respiratory chain NADH dehydrogenase (Complex I) which is composed of 45 different subunits.

It is found in the mitochondrion inner membrane. The enzyme catalyses a ubiquinone + NADH + 5 H(+)(in) = a ubiquinol + NAD(+) + 4 H(+)(out). Core subunit of the mitochondrial membrane respiratory chain NADH dehydrogenase (Complex I) which catalyzes electron transfer from NADH through the respiratory chain, using ubiquinone as an electron acceptor. Essential for the catalytic activity and assembly of complex I. The polypeptide is NADH-ubiquinone oxidoreductase chain 5 (MT-ND5) (Ceratotherium simum (White rhinoceros)).